Here is a 207-residue protein sequence, read N- to C-terminus: Abscisic acid receptor PYL4 (207 aa).

The START-like stretch occupies residues 45–195 (HEVGPNQCCS…NLQSLAKIAE (151 aa)). The cysteines at positions 52 and 176 are disulfide-linked. Residues K81, 111 to 116 (AASSTE), 138 to 144 (RLSNYRS), and E160 each bind abscisate. Positions 107-111 (SGLPA) match the Gate loop motif. Positions 137–139 (HRL) match the Latch loop motif.

It belongs to the PYR/PYL/RCAR abscisic acid intracellular receptor family. In terms of assembly, monomer. Homodimer. Binds ABA on one subunit only. Interacts with HAB1, ABI1 and ABI2, and possibly with other PP2Cs. Binds to CARs protein in an ABA-independent manner, both at the plasma membrane and in the nucleus. Interacts directly with CAR1 and CAR4. Interacts with TOPP1. Interacts with DDA1. Interacts with FREE1 (via N-terminus). Interacts with the E3 ubiquitin-protein ligase RSL1 at the plasma membrane. Ubiquitynated and degraded by the proteasome upon binding to the E3 ubiquitin-protein ligase RSL1 at the plasma membrane.

The protein localises to the cytoplasm. It localises to the nucleus. Its subcellular location is the cell membrane. It is found in the vacuole. Receptor for abscisic acid (ABA) required for ABA-mediated responses such as stomatal closure and germination inhibition. Inhibits the activity of group-A protein phosphatases type 2C (PP2Cs) when activated by ABA. Can be activated by both (-)-ABA and (+)-ABA. The chain is Abscisic acid receptor PYL4 from Arabidopsis thaliana (Mouse-ear cress).